A 927-amino-acid chain; its full sequence is DIS3-like exonuclease 2 (927 aa).

Positions 1-12 (MDLKPNIRRKEK) are enriched in basic residues. The disordered stretch occupies residues 1-168 (MDLKPNIRRK…DTNNATEMVS (168 aa)). Residues 13–31 (RNLLKGEAALEKKGSIDRK) are compositionally biased toward basic and acidic residues. A compositionally biased stretch (basic residues) spans 97 to 106 (VKPKAKKKNS). Residues 107–152 (KEKISKSSKQDEHKTDVHKESVSKLSKNLESRNNRDENSAKREKNN) are compositionally biased toward basic and acidic residues. Polar residues predominate over residues 153-168 (SHQVEADTNNATEMVS). Residues Asp453 and Asp462 each contribute to the Mg(2+) site.

This sequence belongs to the RNR ribonuclease family. DIS3L2 subfamily. Mg(2+) is required as a cofactor. Mn(2+) serves as cofactor.

It localises to the cytoplasm. Its subcellular location is the P-body. 3'-5'-exoribonuclease that specifically recognizes RNAs polyuridylated at their 3' end and mediates their degradation. Component of an exosome-independent RNA degradation pathway that mediates degradation of cytoplasmic mRNAs that have been deadenylated and subsequently uridylated at their 3'. The chain is DIS3-like exonuclease 2 (dis32) from Schizosaccharomyces pombe (strain 972 / ATCC 24843) (Fission yeast).